The primary structure comprises 73 residues: Large ribosomal subunit protein bL31 (73 aa).

The protein belongs to the bacterial ribosomal protein bL31 family. Type A subfamily. In terms of assembly, part of the 50S ribosomal subunit.

Binds the 23S rRNA. The protein is Large ribosomal subunit protein bL31 of Cereibacter sphaeroides (strain ATCC 17025 / ATH 2.4.3) (Rhodobacter sphaeroides).